Here is a 76-residue protein sequence, read N- to C-terminus: Large ribosomal subunit protein uL29 (76 aa).

This sequence belongs to the universal ribosomal protein uL29 family.

This chain is Large ribosomal subunit protein uL29, found in Corynebacterium glutamicum (strain R).